The chain runs to 196 residues: Pyridoxal 5'-phosphate synthase subunit PdxT (196 aa).

46-48 (GES) is a binding site for L-glutamine. Cysteine 78 serves as the catalytic Nucleophile. L-glutamine-binding positions include arginine 105 and 134–135 (IR). Active-site charge relay system residues include histidine 170 and glutamate 172.

It belongs to the glutaminase PdxT/SNO family. In the presence of PdxS, forms a dodecamer of heterodimers. Only shows activity in the heterodimer.

The catalysed reaction is aldehydo-D-ribose 5-phosphate + D-glyceraldehyde 3-phosphate + L-glutamine = pyridoxal 5'-phosphate + L-glutamate + phosphate + 3 H2O + H(+). The enzyme catalyses L-glutamine + H2O = L-glutamate + NH4(+). It functions in the pathway cofactor biosynthesis; pyridoxal 5'-phosphate biosynthesis. Functionally, catalyzes the hydrolysis of glutamine to glutamate and ammonia as part of the biosynthesis of pyridoxal 5'-phosphate. The resulting ammonia molecule is channeled to the active site of PdxS. The polypeptide is Pyridoxal 5'-phosphate synthase subunit PdxT (Pelotomaculum thermopropionicum (strain DSM 13744 / JCM 10971 / SI)).